Reading from the N-terminus, the 340-residue chain is Gallate dioxygenase (340 aa).

The Proton donor role is filled by His-45. His-113 (proton acceptor) is an active-site residue.

This sequence belongs to the LigB/MhpB extradiol dioxygenase family. Fe(2+) serves as cofactor.

It carries out the reaction 3,4,5-trihydroxybenzoate + O2 = (1E)-4-oxobut-1-ene-1,2,4-tricarboxylate + 2 H(+). Ring-cleavage dioxygenase that acts specifically on gallate to produce the keto-tautomer of 4-oxalomesaconate. Mediates the first step of gallate degradation pathway. The chain is Gallate dioxygenase (galA) from Pseudomonas putida (strain ATCC 47054 / DSM 6125 / CFBP 8728 / NCIMB 11950 / KT2440).